A 406-amino-acid chain; its full sequence is Cyclin-dependent kinase 4 homolog (406 aa).

Residues 102–388 (TFLFQALGKG…ARGALSHPFL (287 aa)) enclose the Protein kinase domain. Residues 108–116 (LGKGAYGNV) and lysine 131 contribute to the ATP site. The Proton acceptor role is filled by aspartate 233. Positions 238 and 251 each coordinate Mg(2+).

Belongs to the protein kinase superfamily. CMGC Ser/Thr protein kinase family. CDC2/CDKX subfamily. Interacts with cyd-1; the interaction is likely involved in regulating cdk-4 activity. Mg(2+) serves as cofactor.

It carries out the reaction L-seryl-[protein] + ATP = O-phospho-L-seryl-[protein] + ADP + H(+). The enzyme catalyses L-threonyl-[protein] + ATP = O-phospho-L-threonyl-[protein] + ADP + H(+). Serine/threonine-protein kinase which, in association with cyclin D-like protein cyd-1, is required for the progression through the G1 phase of the cell cycle during postembryonic development by phosphorylating and inhibiting lin-35 and fzr-1. In complex with cyd-1, involved in sex determination during gonadogenesis by regulating the asymmetric division of the somatic gonadal precursor cell (SGP). The protein is Cyclin-dependent kinase 4 homolog of Caenorhabditis elegans.